A 284-amino-acid chain; its full sequence is Bifunctional protein FolD 2 (284 aa).

NADP(+)-binding positions include 166-168 and isoleucine 232; that span reads GAS.

This sequence belongs to the tetrahydrofolate dehydrogenase/cyclohydrolase family. Homodimer.

It catalyses the reaction (6R)-5,10-methylene-5,6,7,8-tetrahydrofolate + NADP(+) = (6R)-5,10-methenyltetrahydrofolate + NADPH. It carries out the reaction (6R)-5,10-methenyltetrahydrofolate + H2O = (6R)-10-formyltetrahydrofolate + H(+). It participates in one-carbon metabolism; tetrahydrofolate interconversion. Catalyzes the oxidation of 5,10-methylenetetrahydrofolate to 5,10-methenyltetrahydrofolate and then the hydrolysis of 5,10-methenyltetrahydrofolate to 10-formyltetrahydrofolate. In Pseudomonas putida (strain ATCC 47054 / DSM 6125 / CFBP 8728 / NCIMB 11950 / KT2440), this protein is Bifunctional protein FolD 2.